A 176-amino-acid polypeptide reads, in one-letter code: ATP synthase subunit delta (176 aa).

Belongs to the ATPase delta chain family. As to quaternary structure, F-type ATPases have 2 components, F(1) - the catalytic core - and F(0) - the membrane proton channel. F(1) has five subunits: alpha(3), beta(3), gamma(1), delta(1), epsilon(1). F(0) has three main subunits: a(1), b(2) and c(10-14). The alpha and beta chains form an alternating ring which encloses part of the gamma chain. F(1) is attached to F(0) by a central stalk formed by the gamma and epsilon chains, while a peripheral stalk is formed by the delta and b chains.

The protein resides in the cell inner membrane. In terms of biological role, f(1)F(0) ATP synthase produces ATP from ADP in the presence of a proton or sodium gradient. F-type ATPases consist of two structural domains, F(1) containing the extramembraneous catalytic core and F(0) containing the membrane proton channel, linked together by a central stalk and a peripheral stalk. During catalysis, ATP synthesis in the catalytic domain of F(1) is coupled via a rotary mechanism of the central stalk subunits to proton translocation. Its function is as follows. This protein is part of the stalk that links CF(0) to CF(1). It either transmits conformational changes from CF(0) to CF(1) or is implicated in proton conduction. The protein is ATP synthase subunit delta of Aliarcobacter butzleri (strain RM4018) (Arcobacter butzleri).